Here is a 259-residue protein sequence, read N- to C-terminus: Protein CWC15 homolog (259 aa).

Positions 1 to 182 (MTTAARPTFD…EKKQEDERIR (182 aa)) are disordered. Basic and acidic residues predominate over residues 52 to 71 (DENRNRDFRKELEEREREAR). Composition is skewed to low complexity over residues 72–82 (SGTGATSSSSG) and 114–126 (QQQAQQAAQQQAA). Residues 129–150 (DADEPLDNDSSDSDSDSDDDDA) show a composition bias toward acidic residues. Residues 150 to 182 (AALLAELQKIKQERLQETARRESEKKQEDERIR) adopt a coiled-coil conformation. Residues 157–182 (QKIKQERLQETARRESEKKQEDERIR) are compositionally biased toward basic and acidic residues.

It belongs to the CWC15 family.

Involved in pre-mRNA splicing. The sequence is that of Protein CWC15 homolog (c12.1) from Drosophila melanogaster (Fruit fly).